Reading from the N-terminus, the 342-residue chain is Trans-3-hydroxy-L-proline dehydratase (342 aa).

The Proton acceptor role is filled by serine 90. Substrate contacts are provided by residues 91–92 (GS), aspartate 252, and 257–258 (GT).

The protein belongs to the proline racemase family.

The enzyme catalyses trans-3-hydroxy-L-proline = 1-pyrroline-2-carboxylate + H2O. It carries out the reaction trans-4-hydroxy-L-proline = cis-4-hydroxy-D-proline. Functionally, catalyzes the dehydration of trans-3-hydroxy-L-proline (t3LHyp) to Delta(1)-pyrroline-2-carboxylate (Pyr2C). Can also catalyze the epimerization of trans-4-hydroxy-L-proline (t4LHyp) to cis-4-hydroxy-D-proline (c4DHyp), albeit with 30-fold lower efficiency. Is likely involved in both degradation pathways that convert t3LHyp to L-proline and t4LHyp to alpha-ketoglutarate, which would allow A.tumefaciens to grow on t3LHyp or t4LHyp as a sole carbon source. Displays no proline racemase activity. The polypeptide is Trans-3-hydroxy-L-proline dehydratase (Agrobacterium fabrum (strain C58 / ATCC 33970) (Agrobacterium tumefaciens (strain C58))).